Here is a 459-residue protein sequence, read N- to C-terminus: Cysteine--tRNA ligase (459 aa).

Position 28 (Cys-28) interacts with Zn(2+). The short motif at 30–40 is the 'HIGH' region element; the sequence is VTIYDLCHIGH. Zn(2+) contacts are provided by Cys-209, His-234, and Glu-238. The 'KMSKS' region signature appears at 266–270; sequence KMSKS. Lys-269 is a binding site for ATP.

The protein belongs to the class-I aminoacyl-tRNA synthetase family. Monomer. Requires Zn(2+) as cofactor.

Its subcellular location is the cytoplasm. It catalyses the reaction tRNA(Cys) + L-cysteine + ATP = L-cysteinyl-tRNA(Cys) + AMP + diphosphate. The protein is Cysteine--tRNA ligase of Vibrio cholerae serotype O1 (strain ATCC 39541 / Classical Ogawa 395 / O395).